Here is a 402-residue protein sequence, read N- to C-terminus: Zinc finger protein 322 (402 aa).

The segment at 43–65 (YQCLECKQNFCENLALIMCERTH) adopts a C2H2-type 1; atypical zinc-finger fold. C2H2-type zinc fingers lie at residues 71–93 (YKCDMCEKTFVQSSDLISHQRIH), 99–121 (YKCSKCEKSFWHHLALSGHQRTH), 127–149 (YTCDICGKNFGQSSDLLVHQRSH), 155–177 (YLCSECDKCFSRSTNLIRHRRTH), 183–205 (FKCLECEKAFSGKSDLISHQRTH), 211–233 (YKCNKCEKSYRHRSAFIVHKRVH), 239–261 (YKCGACEKCFGQKSDLIVHQRVH), and 267–289 (YKCLECMRSFTRSANLIRHQATH). The C2H2-type 10; degenerate zinc-finger motif lies at 293-315 (FKCLEYEKSFNCSSDLIVHQRIH). The C2H2-type 11; degenerate zinc-finger motif lies at 351-373 (YKYTVCDKSFHQSSALLQHQTVH). Serine 391 carries the post-translational modification Phosphoserine.

The protein belongs to the krueppel C2H2-type zinc-finger protein family. In terms of assembly, interacts with POU5F1.

Its subcellular location is the cytoplasm. It localises to the nucleus. In terms of biological role, transcriptional activator. Important for maintenance of pluripotency in embryonic stem cells. Binds directly to the POU5F1 distal enhancer and the NANOG proximal promoter, and enhances expression of both genes. Can also bind to numerous other gene promoters and regulates expression of many other pluripotency factors, either directly or indirectly. Promotes inhibition of MAPK signaling during embryonic stem cell differentiation. The sequence is that of Zinc finger protein 322 (ZNF322) from Macaca fascicularis (Crab-eating macaque).